The primary structure comprises 524 residues: Putative ribose/galactose/methyl galactoside import ATP-binding protein 1 (524 aa).

ABC transporter domains lie at 29-270 (LEMR…VGRT) and 280-524 (VPIG…TGGH). 61–68 (GENGAGKS) contributes to the ATP binding site.

Belongs to the ABC transporter superfamily. Carbohydrate importer 2 (CUT2) (TC 3.A.1.2) family.

It localises to the cell inner membrane. It catalyses the reaction D-ribose(out) + ATP + H2O = D-ribose(in) + ADP + phosphate + H(+). It carries out the reaction D-galactose(out) + ATP + H2O = D-galactose(in) + ADP + phosphate + H(+). Its function is as follows. Part of an ABC transporter complex involved in carbohydrate import. Could be involved in ribose, galactose and/or methyl galactoside import. Responsible for energy coupling to the transport system. This Rhizobium etli (strain ATCC 51251 / DSM 11541 / JCM 21823 / NBRC 15573 / CFN 42) protein is Putative ribose/galactose/methyl galactoside import ATP-binding protein 1.